We begin with the raw amino-acid sequence, 332 residues long: Melanocortin receptor 4 (332 aa).

The Extracellular portion of the chain corresponds to 1-43; the sequence is MVNSTHRGMHASLHLWNRSSHRLHSNASESLGKGYSDGGCYEQ. Residues N3, N17, and N26 are each glycosylated (N-linked (GlcNAc...) asparagine). Intrachain disulfides connect C40–C279 and C271–C277. Residues 44–69 traverse the membrane as a helical segment; it reads LFVSPEVFVTLGVISLLENILVIVAI. The Cytoplasmic segment spans residues 70 to 81; the sequence is AKNKNLHSPMYF. Residues 82–106 traverse the membrane as a helical segment; sequence FICSLAVADMLVSVSNGSETIVITL. The Ca(2+) site is built by E100, D122, and D126. Over 107–123 the chain is Extracellular; that stretch reads LNSTDTDTQSFTVNIDN. Residues 124 to 145 traverse the membrane as a helical segment; that stretch reads VIDSVICSSLLASICSLLSIAV. Over 146 to 165 the chain is Cytoplasmic; the sequence is DRYFTIFYALQYHNIMTVKR. Residues 166–186 form a helical membrane-spanning segment; sequence VRIIISCIWAACTVSGILFII. Residues 187–191 are Extracellular-facing; it reads YSDSS. The chain crosses the membrane as a helical span at residues 192–215; it reads AVIICLITMFFTMLALMASLYVHM. The Cytoplasmic portion of the chain corresponds to 216–248; the sequence is FLMARLHIKRIAVLPGTGAIRQGANMKGAITLT. The helical transmembrane segment at 249–271 threads the bilayer; it reads ILIGVFVVCWAPFFLHLIFYISC. At 272–280 the chain is on the extracellular side; that stretch reads PQNPYCVCF. Residues 281–304 form a helical membrane-spanning segment; it reads MSHFNLYLILIMCNSVIDPLIYAL. Over 305–332 the chain is Cytoplasmic; that stretch reads RSQELRKTFKEIICCYPLGGLCDLSSRY. C318 carries S-palmitoyl cysteine lipidation.

Belongs to the G-protein coupled receptor 1 family. Homodimer; disulfide-linked, also forms higher order oligomers. Interacts with GNAS. Interacts with ATRNL1. Interacts with MGRN1; this interaction competes with GNAS-binding and thus inhibits agonist-induced cAMP production. Interacts with MRAP and MRAP2; these associated factors increase ligand-sensitivity and generation of cAMP.

The protein resides in the cell membrane. Hormone receptor that acts as a key component of the leptin-melanocortin pathway at the intersection of homeostatic maintenance of energetic state. Plays a role in regulating food intake: activation by a stimulating hormone such as anorexigenic alpha-melanocyte stimulating hormone (alpha-MSH) inhibits appetite, whereas binding to a natural antagonist like Agouti-related protein/AGRP promotes appetite. G-protein-coupled receptor that activates conventional Galphas signaling leading to induction of anorexogenic signaling in the hypothalamus to result in negative energy balance. Regulates the firing activity of neurons from the hypothalamus by alpha-MSH and AGRP independently of Galphas signaling by ligand-induced coupling of closure of inwardly rectifying potassium channel KCNJ13. In intestinal epithelial cells, plays a role in the inhibition of hepatic glucose production via nesfatin-1/NUCB2 leading to increased cyclic adenosine monophosphate (cAMP) levels and glucagon-like peptide 1 (GLP-1) secretion in the intestinal epithelium. The chain is Melanocortin receptor 4 (MC4R) from Macaca fascicularis (Crab-eating macaque).